A 714-amino-acid polypeptide reads, in one-letter code: Fatty acid oxidation complex subunit alpha (714 aa).

Residues 1–190 form an enoyl-CoA hydratase region; it reads MDTVSAFKLE…KAGLVDEVVP (190 aa). Residues 306-714 form a 3-hydroxyacyl-CoA dehydrogenase region; it reads GSLRSVAVLG…TFWPADERLT (409 aa).

In the N-terminal section; belongs to the enoyl-CoA hydratase/isomerase family. This sequence in the central section; belongs to the 3-hydroxyacyl-CoA dehydrogenase family. In terms of assembly, heterotetramer of two alpha chains (FadJ) and two beta chains (FadI).

Its subcellular location is the cytoplasm. The enzyme catalyses a (3S)-3-hydroxyacyl-CoA = a (2E)-enoyl-CoA + H2O. It carries out the reaction a 4-saturated-(3S)-3-hydroxyacyl-CoA = a (3E)-enoyl-CoA + H2O. The catalysed reaction is a (3S)-3-hydroxyacyl-CoA + NAD(+) = a 3-oxoacyl-CoA + NADH + H(+). It catalyses the reaction (3S)-3-hydroxybutanoyl-CoA = (3R)-3-hydroxybutanoyl-CoA. The protein operates within lipid metabolism; fatty acid beta-oxidation. Catalyzes the formation of a hydroxyacyl-CoA by addition of water on enoyl-CoA. Also exhibits 3-hydroxyacyl-CoA epimerase and 3-hydroxyacyl-CoA dehydrogenase activities. The protein is Fatty acid oxidation complex subunit alpha of Klebsiella pneumoniae subsp. pneumoniae (strain ATCC 700721 / MGH 78578).